The primary structure comprises 175 residues: MTWRERAEKLLIGISGMPGVGKTTLVLRVLELARSKYRCCGFVTVEVRERGVRIGFDTIDVVSGARVPLARVGTGSPSVGKYVVNLPSCEVISRALRQEDCEVAFIDEIGAMEFKCPTFYTDLRVAVDRIPRIIATVHRNYIHTAEKLGFEIIWLTRENWNSTLSTVLKALSLST.

ATP is bound by residues Gly-16–Thr-23 and Val-103–Gly-110.

The protein belongs to the THEP1 NTPase family.

It carries out the reaction a ribonucleoside 5'-triphosphate + H2O = a ribonucleoside 5'-diphosphate + phosphate + H(+). Functionally, has nucleotide phosphatase activity towards ATP, GTP, CTP, TTP and UTP. May hydrolyze nucleoside diphosphates with lower efficiency. This Pyrobaculum calidifontis (strain DSM 21063 / JCM 11548 / VA1) protein is Nucleoside-triphosphatase THEP1.